The following is a 1004-amino-acid chain: Copper-transporting ATPase (1004 aa).

Topologically, residues 1–262 are cytoplasmic; the sequence is MREVILAVHG…FWKKNSIKST (262 aa). 2 HMA domains span residues 2–67 and 80–146; these read REVI…FDCE and KEGL…FDSN. Cysteine 13, cysteine 16, cysteine 91, and cysteine 94 together coordinate Cu(+). Residues 263 to 283 form a helical membrane-spanning segment; it reads LLAIICMLLYMIVPMMWPTIV. The Lumenal, vesicle portion of the chain corresponds to 284 to 303; it reads QDRIFPYKETSFVRGLFYRD. Residues 304-324 traverse the membrane as a helical segment; sequence ILGVILASYIQFSVGFYFYKA. The Cytoplasmic segment spans residues 325-335; the sequence is AWASLKHGSGT. Residues 336–356 form a helical membrane-spanning segment; that stretch reads MDTLVCVSTTCAYTFSVFSLV. Residues 357 to 370 are Lumenal, vesicle-facing; that stretch reads HNMFHPSSTGKLPR. The helical transmembrane segment at 371-391 threads the bilayer; that stretch reads IVFDTSIMIISYISIGKYLET. Residues 392–528 lie on the Cytoplasmic side of the membrane; sequence LAKSQTSTAL…IQGYADYLAS (137 aa). The chain crosses the membrane as a helical span at residues 529 to 549; it reads IFVPGILILAVLTFFIWCFIL. The Lumenal, vesicle portion of the chain corresponds to 550 to 577; sequence NISANPPVAFTANTKADNFFICLQTATS. The chain crosses the membrane as a helical span at residues 578-598; that stretch reads VVIVACPCALGLATPTAIMVG. The Cytoplasmic portion of the chain corresponds to 599–901; the sequence is TGVGAQNGVL…LKTFKRIKLN (303 aa). Residue aspartate 627 is the 4-aspartylphosphate intermediate of the active site. Positions 838 and 842 each coordinate Mg(2+). Residues 902–924 traverse the membrane as a helical segment; sequence LFWALCYNIFMIPIAMGVLIPWG. At 925-927 the chain is on the lumenal, vesicle side; the sequence is ITL. The helical transmembrane segment at 928–950 threads the bilayer; that stretch reads PPMLAGLAMAFSSVSVVLSSLML. Residues 951–1004 are Cytoplasmic-facing; that stretch reads KKWTPPDIESHGISDFKSKFSIGNFWSRLFSTRAIAGEQDIESQAGLMSNEEVL.

This sequence belongs to the cation transport ATPase (P-type) (TC 3.A.3) family. Type IB subfamily. As to quaternary structure, interacts with the copper chaperone ATX1 via the copper anion.

Its subcellular location is the golgi apparatus. The protein resides in the trans-Golgi network membrane. It catalyses the reaction Cu(+)(in) + ATP + H2O = Cu(+)(out) + ADP + phosphate + H(+). In terms of biological role, copper-transporting P-type ATPase necessary for the proper uptake of iron. Required for export of copper from cytosol into extracytosolic compartment. Retrieves copper from the metallochaperone ATX1 and incorporates it into trans-Golgi vesicles where they are acquired by the cell-surface iron transporter FET3. Required the production of inositolphosphorylceramide D, probably by delivering copper to a yet to be identified enzyme. This Saccharomyces cerevisiae (strain ATCC 204508 / S288c) (Baker's yeast) protein is Copper-transporting ATPase.